A 477-amino-acid chain; its full sequence is Octopamine receptor (477 aa).

Residues 1-55 (MGQAATHVDANYTLINYTEEVIEDDRDACAVADDPKYPSSFGITLAVPEWEAICT) are Extracellular-facing. N-linked (GlcNAc...) asparagine glycans are attached at residues asparagine 11 and asparagine 16. Residues 56–78 (AIVLTLIIISTIVGNILVILSVF) traverse the membrane as a helical segment. Residues 79 to 88 (TYKPLRIVQN) are Cytoplasmic-facing. The chain crosses the membrane as a helical span at residues 89–110 (FFIVSLAVADLTVAILVLPLNV). Residues 111–127 (AYSILGQWVFGIYVCKM) are Extracellular-facing. A helical transmembrane segment spans residues 128-148 (WLTCDIMCCTSSILNLCAIAL). Residues 149–168 (DRYWAITDPINYAQKRTLER) lie on the Cytoplasmic side of the membrane. The chain crosses the membrane as a helical span at residues 169–191 (VLLMIGVVWVLSLIISSPPLLGW). The Extracellular portion of the chain corresponds to 192–216 (NDWPDVFEPDTPCRLTSQPGFVIFS). A helical membrane pass occupies residues 217 to 238 (SSGSFYIPLVIMTVVYFEIYLA). Over 239-405 (TKKRLRDRAK…LTRERRAART (167 aa)) the chain is Cytoplasmic. Disordered stretches follow at residues 256–317 (SSGQ…SKDD) and 334–358 (VTDM…THED). 2 stretches are compositionally biased toward basic and acidic residues: residues 263–272 (NNKDDHHDQD) and 279–295 (NHNE…DNEK). The span at 296–312 (KKRTRKLTPKKKPKRKY) shows a compositional bias: basic residues. Residues 406–427 (LGIIMGVFVVCWLPFFVIYLVI) form a helical membrane-spanning segment. Residues 428 to 439 (PFCASCCLSNKF) lie on the Extracellular side of the membrane. Residues 440–460 (INFITWLGYCNSALNPLIYTI) traverse the membrane as a helical segment. The Cytoplasmic segment spans residues 461–477 (FNMDFRRAFKKLLCMKP).

It belongs to the G-protein coupled receptor 1 family.

It is found in the cell membrane. Functionally, receptor for octopamine. Octopamine (OA) is a neurotransmitter, neurohormone, and neuromodulator in invertebrates. The activity of this receptor is mediated by G proteins which activate adenylyl cyclase. In Heliothis virescens (Tobacco budworm moth), this protein is Octopamine receptor.